Reading from the N-terminus, the 172-residue chain is NAD(P)H-quinone oxidoreductase subunit I, chloroplastic (172 aa).

4Fe-4S ferredoxin-type domains are found at residues 55 to 84 (GRIH…VDWK) and 95 to 124 (LNYS…MTEE). Positions 64, 67, 70, 74, 104, 107, 110, and 114 each coordinate [4Fe-4S] cluster.

The protein belongs to the complex I 23 kDa subunit family. In terms of assembly, NDH is composed of at least 16 different subunits, 5 of which are encoded in the nucleus. The cofactor is [4Fe-4S] cluster.

It is found in the plastid. The protein resides in the chloroplast thylakoid membrane. It carries out the reaction a plastoquinone + NADH + (n+1) H(+)(in) = a plastoquinol + NAD(+) + n H(+)(out). It catalyses the reaction a plastoquinone + NADPH + (n+1) H(+)(in) = a plastoquinol + NADP(+) + n H(+)(out). Its function is as follows. NDH shuttles electrons from NAD(P)H:plastoquinone, via FMN and iron-sulfur (Fe-S) centers, to quinones in the photosynthetic chain and possibly in a chloroplast respiratory chain. The immediate electron acceptor for the enzyme in this species is believed to be plastoquinone. Couples the redox reaction to proton translocation, and thus conserves the redox energy in a proton gradient. This is NAD(P)H-quinone oxidoreductase subunit I, chloroplastic from Crucihimalaya wallichii (Rock-cress).